Consider the following 156-residue polypeptide: D-aminoacyl-tRNA deacylase (156 aa).

The Gly-cisPro motif, important for rejection of L-amino acids signature appears at 142 to 143 (GP).

Belongs to the DTD family. Homodimer.

The protein resides in the cytoplasm. The enzyme catalyses glycyl-tRNA(Ala) + H2O = tRNA(Ala) + glycine + H(+). It carries out the reaction a D-aminoacyl-tRNA + H2O = a tRNA + a D-alpha-amino acid + H(+). In terms of biological role, an aminoacyl-tRNA editing enzyme that deacylates mischarged D-aminoacyl-tRNAs. Also deacylates mischarged glycyl-tRNA(Ala), protecting cells against glycine mischarging by AlaRS. Acts via tRNA-based rather than protein-based catalysis; rejects L-amino acids rather than detecting D-amino acids in the active site. By recycling D-aminoacyl-tRNA to D-amino acids and free tRNA molecules, this enzyme counteracts the toxicity associated with the formation of D-aminoacyl-tRNA entities in vivo and helps enforce protein L-homochirality. In Cupriavidus metallidurans (strain ATCC 43123 / DSM 2839 / NBRC 102507 / CH34) (Ralstonia metallidurans), this protein is D-aminoacyl-tRNA deacylase.